We begin with the raw amino-acid sequence, 127 residues long: Fluoride-specific ion channel FluC (127 aa).

The next 4 membrane-spanning stretches (helical) occupy residues 4–24 (LDYLTIAFGGAIGAVLRYLVS), 39–59 (GTIIVNSVGSFFLSFLMFAAI), 68–88 (AILFFGTGLLGAFTTFSTFTY), and 102–122 (VAYALVNLLFAFTCAYFGMIL). Na(+) contacts are provided by Gly78 and Thr81.

It belongs to the fluoride channel Fluc/FEX (TC 1.A.43) family.

The protein resides in the cell inner membrane. The catalysed reaction is fluoride(in) = fluoride(out). Na(+) is not transported, but it plays an essential structural role and its presence is essential for fluoride channel function. Functionally, fluoride-specific ion channel. Important for reducing fluoride concentration in the cell, thus reducing its toxicity. This chain is Fluoride-specific ion channel FluC, found in Thermotoga petrophila (strain ATCC BAA-488 / DSM 13995 / JCM 10881 / RKU-1).